An 884-amino-acid chain; its full sequence is Alanine--tRNA ligase (884 aa).

Zn(2+)-binding residues include histidine 562, histidine 566, cysteine 674, and histidine 678.

This sequence belongs to the class-II aminoacyl-tRNA synthetase family. Zn(2+) serves as cofactor.

It is found in the cytoplasm. The catalysed reaction is tRNA(Ala) + L-alanine + ATP = L-alanyl-tRNA(Ala) + AMP + diphosphate. Its function is as follows. Catalyzes the attachment of alanine to tRNA(Ala) in a two-step reaction: alanine is first activated by ATP to form Ala-AMP and then transferred to the acceptor end of tRNA(Ala). Also edits incorrectly charged Ser-tRNA(Ala) and Gly-tRNA(Ala) via its editing domain. This is Alanine--tRNA ligase from Rhizobium johnstonii (strain DSM 114642 / LMG 32736 / 3841) (Rhizobium leguminosarum bv. viciae).